The sequence spans 257 residues: Deoxyribose-phosphate aldolase (257 aa).

The Proton donor/acceptor role is filled by Asp-102. Lys-166 serves as the catalytic Schiff-base intermediate with acetaldehyde. The Proton donor/acceptor role is filled by Lys-198.

This sequence belongs to the DeoC/FbaB aldolase family. DeoC type 2 subfamily.

The protein resides in the cytoplasm. The enzyme catalyses 2-deoxy-D-ribose 5-phosphate = D-glyceraldehyde 3-phosphate + acetaldehyde. It functions in the pathway carbohydrate degradation; 2-deoxy-D-ribose 1-phosphate degradation; D-glyceraldehyde 3-phosphate and acetaldehyde from 2-deoxy-alpha-D-ribose 1-phosphate: step 2/2. In terms of biological role, catalyzes a reversible aldol reaction between acetaldehyde and D-glyceraldehyde 3-phosphate to generate 2-deoxy-D-ribose 5-phosphate. In Shewanella halifaxensis (strain HAW-EB4), this protein is Deoxyribose-phosphate aldolase.